Reading from the N-terminus, the 545-residue chain is Inosine-5'-monophosphate dehydrogenase (545 aa).

CBS domains lie at 138–194 (MITD…DYDT) and 201–258 (MTKE…PDAT). NAD(+)-binding positions include Asp295 and 347–349 (GIG). Positions 349 and 351 each coordinate K(+). Ser352 serves as a coordination point for IMP. Cys354 lines the K(+) pocket. Residue Cys354 is the Thioimidate intermediate of the active site. Residues 387–389 (DGG), 410–411 (GG), and 434–438 (YRGMG) each bind IMP. Arg455 serves as the catalytic Proton acceptor. IMP is bound at residue Glu470. Positions 524, 525, and 526 each coordinate K(+).

The protein belongs to the IMPDH/GMPR family. Homotetramer. It depends on K(+) as a cofactor.

It carries out the reaction IMP + NAD(+) + H2O = XMP + NADH + H(+). It participates in purine metabolism; XMP biosynthesis via de novo pathway; XMP from IMP: step 1/1. With respect to regulation, mycophenolic acid (MPA) is a non-competitive inhibitor that prevents formation of the closed enzyme conformation by binding to the same site as the amobile flap. In contrast, mizoribine monophosphate (MZP) is a competitive inhibitor that induces the closed conformation. MPA is a potent inhibitor of mammalian IMPDHs but a poor inhibitor of the bacterial enzymes. MZP is a more potent inhibitor of bacterial IMPDH. Catalyzes the conversion of inosine 5'-phosphate (IMP) to xanthosine 5'-phosphate (XMP), the first committed and rate-limiting step in the de novo synthesis of guanine nucleotides, and therefore plays an important role in the regulation of cell growth. In Bifidobacterium longum (strain NCC 2705), this protein is Inosine-5'-monophosphate dehydrogenase.